A 187-amino-acid chain; its full sequence is Protein ECM23 (187 aa).

Disordered regions lie at residues 106-127 (GKKSLAGYRPKSRKKQTILPNG) and 167-187 (KKIRSQQSSDDGTKNFIFKNK). The GATA-type zinc-finger motif lies at 126–180 (NGQPKECATCGDTWTSQWRSGPNGNVELCSRCGIAYRKKMEKKIRSQQSSDDGTK).

Functionally, involved in morphogenesis. May be involved in cell wall organization and biogenesis. This Saccharomyces cerevisiae (strain ATCC 204508 / S288c) (Baker's yeast) protein is Protein ECM23 (ECM23).